Here is an 89-residue protein sequence, read N- to C-terminus: Small ribosomal subunit protein uS15 (89 aa).

The protein belongs to the universal ribosomal protein uS15 family. In terms of assembly, part of the 30S ribosomal subunit. Forms a bridge to the 50S subunit in the 70S ribosome, contacting the 23S rRNA.

In terms of biological role, one of the primary rRNA binding proteins, it binds directly to 16S rRNA where it helps nucleate assembly of the platform of the 30S subunit by binding and bridging several RNA helices of the 16S rRNA. Its function is as follows. Forms an intersubunit bridge (bridge B4) with the 23S rRNA of the 50S subunit in the ribosome. The protein is Small ribosomal subunit protein uS15 of Elusimicrobium minutum (strain Pei191).